The primary structure comprises 240 residues: UDP-2,3-diacylglucosamine hydrolase (240 aa).

Mn(2+) is bound by residues D8, H10, D41, N79, and H114. A substrate-binding site is contributed by 79–80 (NR). Substrate is bound by residues D122, S160, N164, K167, and H195. Residues H195 and H197 each coordinate Mn(2+).

This sequence belongs to the LpxH family. It depends on Mn(2+) as a cofactor.

It is found in the cell inner membrane. It carries out the reaction UDP-2-N,3-O-bis[(3R)-3-hydroxytetradecanoyl]-alpha-D-glucosamine + H2O = 2-N,3-O-bis[(3R)-3-hydroxytetradecanoyl]-alpha-D-glucosaminyl 1-phosphate + UMP + 2 H(+). It functions in the pathway glycolipid biosynthesis; lipid IV(A) biosynthesis; lipid IV(A) from (3R)-3-hydroxytetradecanoyl-[acyl-carrier-protein] and UDP-N-acetyl-alpha-D-glucosamine: step 4/6. Functionally, hydrolyzes the pyrophosphate bond of UDP-2,3-diacylglucosamine to yield 2,3-diacylglucosamine 1-phosphate (lipid X) and UMP by catalyzing the attack of water at the alpha-P atom. Involved in the biosynthesis of lipid A, a phosphorylated glycolipid that anchors the lipopolysaccharide to the outer membrane of the cell. The protein is UDP-2,3-diacylglucosamine hydrolase of Salmonella paratyphi A (strain ATCC 9150 / SARB42).